The sequence spans 147 residues: Hemoglobin subunit gamma-2 (147 aa).

One can recognise a Globin domain in the interval 3–147 (HFTEEDKATI…VASALSSRYH (145 aa)). T13 is subject to Phosphothreonine. Phosphoserine occurs at positions 45, 51, and 53. K60 carries the post-translational modification N6-acetyllysine. H64 provides a ligand contact to heme b. N6-acetyllysine is present on K83. H93 serves as a coordination point for heme b. C94 is modified (S-nitrosocysteine). A phosphoserine mark is found at S140, S143, and S144.

Belongs to the globin family. As to quaternary structure, heterotetramer of two alpha chains and two gamma chains in fetal hemoglobin (Hb F). Red blood cells.

In terms of biological role, gamma chains make up the fetal hemoglobin F, in combination with alpha chains. In Gorilla gorilla gorilla (Western lowland gorilla), this protein is Hemoglobin subunit gamma-2 (HBG2).